The sequence spans 274 residues: Protein LNK4 (274 aa).

The tract at residues 209-249 is disordered; sequence NSQQKSDSNSDEFLEDRTRETEFETKLNRQSRGQSHIQQDG. A compositionally biased stretch (basic and acidic residues) spans 223–235; it reads EDRTRETEFETKL. A compositionally biased stretch (polar residues) spans 236–249; it reads NRQSRGQSHIQQDG.

In terms of assembly, interacts with REV8.

Probable transcriptional coactivator. This Arabidopsis thaliana (Mouse-ear cress) protein is Protein LNK4.